The sequence spans 634 residues: 1-deoxy-D-xylulose-5-phosphate synthase (634 aa).

Thiamine diphosphate-binding positions include His72 and 113-115; that span reads GHS. Asp144 contributes to the Mg(2+) binding site. Residues 145–146, Asn173, Tyr284, and Glu367 each bind thiamine diphosphate; that span reads GA. Asn173 is a Mg(2+) binding site.

It belongs to the transketolase family. DXPS subfamily. As to quaternary structure, homodimer. It depends on Mg(2+) as a cofactor. Thiamine diphosphate is required as a cofactor.

The enzyme catalyses D-glyceraldehyde 3-phosphate + pyruvate + H(+) = 1-deoxy-D-xylulose 5-phosphate + CO2. Its pathway is metabolic intermediate biosynthesis; 1-deoxy-D-xylulose 5-phosphate biosynthesis; 1-deoxy-D-xylulose 5-phosphate from D-glyceraldehyde 3-phosphate and pyruvate: step 1/1. Functionally, catalyzes the acyloin condensation reaction between C atoms 2 and 3 of pyruvate and glyceraldehyde 3-phosphate to yield 1-deoxy-D-xylulose-5-phosphate (DXP). The protein is 1-deoxy-D-xylulose-5-phosphate synthase of Listeria welshimeri serovar 6b (strain ATCC 35897 / DSM 20650 / CCUG 15529 / CIP 8149 / NCTC 11857 / SLCC 5334 / V8).